The sequence spans 417 residues: PRKCA-binding protein (417 aa).

The PDZ domain occupies Lys22 to Gln105. The Zn(2+) site is built by Cys44 and Cys46. A Phosphothreonine modification is found at Thr82. Residues Leu144 to Val357 enclose the AH domain. The interval Gln375–Ser417 is disordered. Residues Glu377–Ala393 are compositionally biased toward acidic residues. Cys415 is lipidated: S-palmitoyl cysteine; by DHHC8.

Monomer and homodimer. Interacts with CXADR. Interacts presynaptically with the glutamate receptors GRIA2, GRIA3, GRIK3, isoform 3 of GRIA4, isoform A of GRM4, GRM7 and GRM8; with NAPA and NAPB; and with BTG2. The interaction with NAPA and NAPB disrupts the interaction with GRIA2, conducting to the internalization of GRIA2. Interacts with PRKCA; with the amine transporters SLC6A2 and SLC6A3; with the channels ASIC1 and ASIC2; with the GTP-binding proteins ARF1 and ARF3; with the ephrin receptor tyrosine kinases EPHA7, EPHB1 and EPHB2; with ERBB2 and through its PDZ domain with the C-terminal tail of PRLHR. Interacts with UNC5A. Interacts (via AH domain) with NCS1/FREQ; in a calcium-dependent manner. Interacts with F-actin and associates with the ARP2/3 complex. Interacts (via PDZ domain) with ARF1 (activated); the interaction blocks Arp2/3 complex inhibition. Interacts with SORCS3. Post-translationally, phosphorylation at Thr-82 appears to inhibit the interaction with AMPA receptors. In terms of processing, palmitoylation on Cys-415 is essential for long-term synaptic depression (LTD).

It is found in the cytoplasm. The protein resides in the perinuclear region. It localises to the membrane. The protein localises to the postsynaptic density. Its subcellular location is the synapse. It is found in the synaptosome. The protein resides in the cytoskeleton. Its function is as follows. Probable adapter protein that bind to and organize the subcellular localization of a variety of membrane proteins containing some PDZ recognition sequence. Involved in the clustering of various receptors, possibly by acting at the receptor internalization level. Plays a role in synaptic plasticity by regulating the trafficking and internalization of AMPA receptors. May be regulated upon PRKCA activation. May regulate ASIC1/ASIC3 channel. Regulates actin polymerization by inhibiting the actin-nucleating activity of the Arp2/3 complex; the function is competitive with nucleation promoting factors and is linked to neuronal morphology regulation and AMPA receptor (AMPAR) endocytosis. Via interaction with the Arp2/3 complex involved in regulation of synaptic plasicity of excitatory synapses and required for spine shrinkage during long-term depression (LTD). Involved in regulation of astrocyte morphology, antagonistic to Arp2/3 complex activator WASL/N-WASP function. The protein is PRKCA-binding protein (PICK1) of Bos taurus (Bovine).